The primary structure comprises 85 residues: Exodeoxyribonuclease 7 small subunit (85 aa).

This sequence belongs to the XseB family. As to quaternary structure, heterooligomer composed of large and small subunits.

It is found in the cytoplasm. The catalysed reaction is Exonucleolytic cleavage in either 5'- to 3'- or 3'- to 5'-direction to yield nucleoside 5'-phosphates.. In terms of biological role, bidirectionally degrades single-stranded DNA into large acid-insoluble oligonucleotides, which are then degraded further into small acid-soluble oligonucleotides. The protein is Exodeoxyribonuclease 7 small subunit of Alkalilimnicola ehrlichii (strain ATCC BAA-1101 / DSM 17681 / MLHE-1).